A 408-amino-acid chain; its full sequence is Phosphoenolpyruvate/phosphate translocator 1, chloroplastic (408 aa).

A chloroplast-targeting transit peptide spans 1-66 (MQSAAAVGLL…ISARRIGLVP (66 aa)). Helical transmembrane passes span 105 to 125 (TLQL…FNIY), 139 to 159 (ITNV…ITGI), 165 to 185 (ISGA…MGNL), 222 to 242 (PTPF…LASL), 245 to 262 (ASFN…NVTF), 283 to 303 (ITLF…VTLL), and 375 to 395 (TPVS…VFLY). An EamA domain is found at 124-241 (IYNKQVLKVF…PIVGGVALAS (118 aa)).

It belongs to the TPT transporter family. PPT (TC 2.A.7.9) subfamily.

Its subcellular location is the plastid. The protein resides in the chloroplast membrane. Functionally, phosphoenolpyruvate/phosphate translocator that transports phosphoenolpyruvate (PEP) and dihydroxyacetone phosphate. This chain is Phosphoenolpyruvate/phosphate translocator 1, chloroplastic (PPT1), found in Oryza sativa subsp. japonica (Rice).